A 256-amino-acid chain; its full sequence is Small ribosomal subunit protein eS1 (256 aa).

Alanine 2 is subject to N-acetylalanine; partial.

Belongs to the eukaryotic ribosomal protein eS1 family. Component of the small ribosomal subunit. Mature ribosomes consist of a small (40S) and a large (60S) subunit. The 40S subunit contains about 33 different proteins and 1 molecule of RNA (18S). The 60S subunit contains about 49 different proteins and 3 molecules of RNA (25S, 5.8S and 5S).

It localises to the cytoplasm. In Fusarium vanettenii (strain ATCC MYA-4622 / CBS 123669 / FGSC 9596 / NRRL 45880 / 77-13-4) (Fusarium solani subsp. pisi), this protein is Small ribosomal subunit protein eS1.